The primary structure comprises 888 residues: Semaphorin-6B (888 aa).

Residues 1–25 (MQTPRASPPRPALLLLLLLLGGAHG) form the signal peptide. Residues 26–603 (LFPEEPPPLS…VSVNLLVTSS (578 aa)) are Extracellular-facing. Positions 31-523 (PPPLSVAPRD…FPRCVVRVPV (493 aa)) constitute a Sema domain. A glycan (N-linked (GlcNAc...) asparagine) is linked at Asn74. 2 disulfides stabilise this stretch: Cys116–Cys126 and Cys144–Cys153. N-linked (GlcNAc...) asparagine glycans are attached at residues Asn155, Asn167, and Asn291. Cystine bridges form between Cys267/Cys378 and Cys292/Cys337. 3 N-linked (GlcNAc...) asparagine glycosylation sites follow: Asn386, Asn441, and Asn462. 4 disulfide bridges follow: Cys486-Cys517, Cys526-Cys544, Cys532-Cys578, and Cys536-Cys552. Residues 604–624 (VAAFVVGAVVSGFSVGWFVGL) form a helical membrane-spanning segment. Over 625-888 (RERRELARRK…GADRTAPPVP (264 aa)) the chain is Cytoplasmic. Disordered stretches follow at residues 651-679 (VSRL…PPEA), 695-742 (LQGG…HPLL), and 757-888 (RAPE…PPVP). Over residues 661-674 (GPGGRGGGGGGGAG) the composition is skewed to gly residues. Arg665 carries the omega-N-methylarginine modification. A compositionally biased stretch (low complexity) spans 706–717 (LLPTPEQTPLPQ).

This sequence belongs to the semaphorin family. (Microbial infection) Interacts with P.sordellii toxin TcsL; semaphorins SEMA6A and SEMA6B constitute the major host receptors for TcsL in the vascular endothelium. Expressed in the brain in GABAergic neurons.

Its subcellular location is the cell membrane. In terms of biological role, functions as a cell surface repellent for mossy fibers of developing neurons in the hippocampus where it plays a role in axon guidance. May function through the PLXNA4 receptor expressed by mossy cell axons. (Microbial infection) Acts as a receptor for P.sordellii toxin TcsL in the in the vascular endothelium. This chain is Semaphorin-6B (SEMA6B), found in Homo sapiens (Human).